Here is a 202-residue protein sequence, read N- to C-terminus: NAD(P)H dehydrogenase (quinone) (202 aa).

Residues 7–193 (VLVLYYSMYG…TIARFQGRHF (187 aa)) enclose the Flavodoxin-like domain. Residues 13 to 18 (SMYGHI) and 82 to 84 (TRF) each bind FMN. Residue tyrosine 15 participates in NAD(+) binding. Tryptophan 102 contacts substrate. Residues 117 to 122 (STATGG) and histidine 137 contribute to the FMN site.

The protein belongs to the WrbA family. FMN is required as a cofactor.

The catalysed reaction is a quinone + NADH + H(+) = a quinol + NAD(+). It catalyses the reaction a quinone + NADPH + H(+) = a quinol + NADP(+). The chain is NAD(P)H dehydrogenase (quinone) from Rhodospirillum rubrum (strain ATCC 11170 / ATH 1.1.1 / DSM 467 / LMG 4362 / NCIMB 8255 / S1).